The primary structure comprises 145 residues: Bacilliredoxin GK1781 (145 aa).

It belongs to the bacilliredoxin family.

The chain is Bacilliredoxin GK1781 from Geobacillus kaustophilus (strain HTA426).